The following is a 193-amino-acid chain: Probable type II restriction enzyme HpyAORF263P (193 aa).

This sequence belongs to the BsaWI type II restriction endonuclease family.

It catalyses the reaction Endonucleolytic cleavage of DNA to give specific double-stranded fragments with terminal 5'-phosphates.. Its function is as follows. A P subtype probable restriction enzyme that recognizes the double-stranded sequence CCGG; the cleavage site is unknown. In Helicobacter pylori (strain ATCC 700392 / 26695) (Campylobacter pylori), this protein is Probable type II restriction enzyme HpyAORF263P.